A 926-amino-acid chain; its full sequence is BTB/POZ domain-containing protein KCTD19 (926 aa).

Residues 18–72 enclose the BTB 1 domain; it reads NVGGWHFSVPRSKLSQFPDSLLWKEASALTSSESQRLFIDRDGSTFRHVHYYLYT. Ser-270 carries the post-translational modification Phosphoserine. A BTB 2 domain is found at 398 to 485; sequence IKVYVGSHWY…YHIPSLSEAL (88 aa). Positions 673–751 are disordered; sequence GSEAASQPST…PAPEQPLPEA (79 aa). Basic and acidic residues predominate over residues 730–742; sequence DWSKQRTKERESP.

As to quaternary structure, identified in a complex with ZNF541, HDAC1 and HSPA2. Identified in a complex with ZNF541 and HDAC1. Identified in a complex with HDAC1, HDAC2, DNTTIP1 and ZNF541.

It localises to the nucleus. Functionally, transcription regulator which is essential for male fertility and for the completion of meiotic prophase in spermatocytes. Regulates progression of the pachytene stage of meiotic prophase and promotes the transcriptional activation activity ZNF541. Required for the organization of chromosomes during metaphase I. The polypeptide is BTB/POZ domain-containing protein KCTD19 (KCTD19) (Homo sapiens (Human)).